We begin with the raw amino-acid sequence, 376 residues long: Succinyl-diaminopimelate desuccinylase (376 aa).

His-67 contacts Zn(2+). Asp-69 is a catalytic residue. Asp-100 contributes to the Zn(2+) binding site. Glu-134 (proton acceptor) is an active-site residue. Zn(2+)-binding residues include Glu-135, Glu-163, and His-349.

It belongs to the peptidase M20A family. DapE subfamily. Homodimer. The cofactor is Zn(2+). Co(2+) serves as cofactor.

The enzyme catalyses N-succinyl-(2S,6S)-2,6-diaminopimelate + H2O = (2S,6S)-2,6-diaminopimelate + succinate. It participates in amino-acid biosynthesis; L-lysine biosynthesis via DAP pathway; LL-2,6-diaminopimelate from (S)-tetrahydrodipicolinate (succinylase route): step 3/3. Its function is as follows. Catalyzes the hydrolysis of N-succinyl-L,L-diaminopimelic acid (SDAP), forming succinate and LL-2,6-diaminopimelate (DAP), an intermediate involved in the bacterial biosynthesis of lysine and meso-diaminopimelic acid, an essential component of bacterial cell walls. This is Succinyl-diaminopimelate desuccinylase from Shewanella woodyi (strain ATCC 51908 / MS32).